The chain runs to 123 residues: Large ribosomal subunit protein bL12 (123 aa).

It belongs to the bacterial ribosomal protein bL12 family. In terms of assembly, homodimer. Part of the ribosomal stalk of the 50S ribosomal subunit. Forms a multimeric L10(L12)X complex, where L10 forms an elongated spine to which 2 to 4 L12 dimers bind in a sequential fashion. Binds GTP-bound translation factors.

In terms of biological role, forms part of the ribosomal stalk which helps the ribosome interact with GTP-bound translation factors. Is thus essential for accurate translation. In Borrelia duttonii (strain Ly), this protein is Large ribosomal subunit protein bL12.